The primary structure comprises 338 residues: MNLNRFERYPLTFGPSPITPLKRLSQHLGGKVELYAKREDCNSGLAFGGNKTRKLEYLIPEAIEQGCDTLVSIGGIQSNQTRQVAAVAAHLGMKCVLVQENWVNYSDAVYDRVGNIEMSRIMGADVRLDAAGFDIGIRPSWEKAMSDVVEQGGKPFPIPAGCSEHPYGGLGFVGFAKKLRQQEKELGFKFNYIVVCSVTGSTQAGMVVGFAADGRSKNVIGVDASAKPEQTKAQILRIARHTAELVELGREITEEDVVLDTRFAYPEYGLPNEGTLEAIRLCGSLEGVLTDPVYEGKSMHGMIEMVRRGEFPEGSKVLYAHLGGAPALNAYSFLFRDG.

N6-(pyridoxal phosphate)lysine is present on Lys51. Ser78 functions as the Nucleophile in the catalytic mechanism.

It belongs to the ACC deaminase/D-cysteine desulfhydrase family. Pyridoxal 5'-phosphate serves as cofactor.

It catalyses the reaction 1-aminocyclopropane-1-carboxylate + H2O = 2-oxobutanoate + NH4(+). Functionally, catalyzes a cyclopropane ring-opening reaction, the irreversible conversion of 1-aminocyclopropane-1-carboxylate (ACC) to ammonia and alpha-ketobutyrate. Allows growth on ACC as a nitrogen source. In Enterobacter cloacae, this protein is 1-aminocyclopropane-1-carboxylate deaminase.